Here is a 232-residue protein sequence, read N- to C-terminus: tRNA1(Val) (adenine(37)-N6)-methyltransferase (232 aa).

The protein belongs to the methyltransferase superfamily. tRNA (adenine-N(6)-)-methyltransferase family.

It localises to the cytoplasm. The enzyme catalyses adenosine(37) in tRNA1(Val) + S-adenosyl-L-methionine = N(6)-methyladenosine(37) in tRNA1(Val) + S-adenosyl-L-homocysteine + H(+). Its function is as follows. Specifically methylates the adenine in position 37 of tRNA(1)(Val) (anticodon cmo5UAC). The polypeptide is tRNA1(Val) (adenine(37)-N6)-methyltransferase (Pseudoalteromonas translucida (strain TAC 125)).